A 371-amino-acid chain; its full sequence is Transcription termination/antitermination protein NusA (371 aa).

Residues 135–199 form the S1 motif domain; sequence EDIMTGIVQR…KGPQIYVSRT (65 aa). In terms of domain architecture, KH spans 301–367; it reads EKATTVIVPD…EPLFTEPETA (67 aa). Positions 347–371 are disordered; that stretch reads GIYPRELEEDDEPLFTEPETAESDE. Residues 353–371 show a composition bias toward acidic residues; that stretch reads LEEDDEPLFTEPETAESDE.

Belongs to the NusA family. As to quaternary structure, monomer. Binds directly to the core enzyme of the DNA-dependent RNA polymerase and to nascent RNA.

The protein localises to the cytoplasm. Functionally, participates in both transcription termination and antitermination. The polypeptide is Transcription termination/antitermination protein NusA (Bacillus subtilis (strain 168)).